The following is a 283-amino-acid chain: NFU1 iron-sulfur cluster scaffold homolog, mitochondrial (283 aa).

The N-terminal 30 residues, 1–30 (MSKFLSQAALNTLRNTRLGSRQLVRSFAGI), are a transit peptide targeting the mitochondrion. The nifU stretch occupies residues 182–250 (IKELLDTRIR…IPEVESVEQV (69 aa)). [4Fe-4S] cluster-binding residues include Cys-219 and Cys-222.

Belongs to the NifU family.

It is found in the mitochondrion. Molecular scaffold for [Fe-S] cluster assembly of mitochondrial iron-sulfur proteins. The protein is NFU1 iron-sulfur cluster scaffold homolog, mitochondrial of Drosophila erecta (Fruit fly).